A 103-amino-acid chain; its full sequence is Conantokin-Br (103 aa).

Positions 1-21 (MQLYTYLYLLVPLVTFHLILG) are cleaved as a signal peptide. Residues 22–79 (TGTLDHGGALTERRSTDATALKPEPVLQKSAARSTDDNGKDRLTQMKRILKKRGKNAR) constitute a propeptide that is removed on maturation. The interval 34-64 (RRSTDATALKPEPVLQKSAARSTDDNGKDRL) is disordered. The segment covering 55-64 (STDDNGKDRL) has biased composition (basic and acidic residues). A 4-carboxyglutamate mark is found at Glu82, Glu83, Glu89, and Glu93. The a divalent metal cation site is built by Glu89 and Glu93.

The protein belongs to the conotoxin B superfamily. Ca(2+) serves as cofactor. The cofactor is Mg(2+). As to expression, expressed by the venom duct.

The protein localises to the secreted. Conantokins inhibit N-methyl-D-aspartate (NMDA) receptors. This toxin inhibits NR2 subunits N-methyl-D-aspartate (NMDA) receptor-mediated calcium influx in central nervous system neurons in the following order of preference: NR2B/GRIN2B (IC(50)=0.14 uM), NR2D/GRIN2D (IC(50)=0.31 uM), NR2A/GRIN2A (IC(50)=0.68 uM) and NR2C/GRIN2A (IC(50)=4.9 uM), when tested on rat receptors. The sequence is that of Conantokin-Br from Conus sulcatus (Sulcate cone).